The primary structure comprises 167 residues: Bacterial non-heme ferritin-like protein (167 aa).

Residues 1-145 (MATAGMLLKL…TILDEVRSAK (145 aa)) form the Ferritin-like diiron domain.

This sequence belongs to the ferritin family. Prokaryotic subfamily.

It localises to the cytoplasm. The chain is Bacterial non-heme ferritin-like protein (ftnB) from Escherichia coli O157:H7.